A 685-amino-acid polypeptide reads, in one-letter code: ABC transporter G family member 26 (685 aa).

The ABC transporter domain occupies 65–329 (LKFEDVEYKV…FSSLRILPEI (265 aa)). 124–131 (GPSGSGKT) lines the ATP pocket. An ABC transmembrane type-2 domain is found at 414 to 623 (DQFLILSRRT…GFRLLLKVQY (210 aa)). The next 6 membrane-spanning stretches (helical) occupy residues 432-452 (FDKL…LLWW), 468-488 (LMFY…VYVF), 518-538 (MVAH…MAEF), 542-562 (IPCF…SQGA), 576-596 (AGMI…YYVQ), and 648-668 (TINL…AFGY).

The protein belongs to the ABC transporter superfamily. ABCG family. Eye pigment precursor importer (TC 3.A.1.204) subfamily. Homo- or heterodimer. In terms of tissue distribution, mostly expressed in flowers, especially in tapetum within anthers.

The protein localises to the cell membrane. Its subcellular location is the endoplasmic reticulum membrane. Functionally, mediates the transport of sporopollenin precursors (e.g. polyketides) across the tapetum plasma membrane into the anther locule for polymerization on developing microspore walls, thus being required for male fertility and pollen exine formation and patterning prior to tapetum programmed cell death. This chain is ABC transporter G family member 26, found in Arabidopsis thaliana (Mouse-ear cress).